Consider the following 395-residue polypeptide: S-adenosylmethionine synthase (395 aa).

H12 contributes to the ATP binding site. D14 provides a ligand contact to Mg(2+). Position 40 (E40) interacts with K(+). E53 and Q96 together coordinate L-methionine. The flexible loop stretch occupies residues 96 to 106 (QSKEIADAVNF). ATP contacts are provided by residues 174–176 (DGK), 242–243 (RF), D251, 257–258 (RK), A274, and K278. D251 contacts L-methionine. K282 contributes to the L-methionine binding site.

The protein belongs to the AdoMet synthase family. Homotetramer; dimer of dimers. The cofactor is Mg(2+). It depends on K(+) as a cofactor.

Its subcellular location is the cytoplasm. The catalysed reaction is L-methionine + ATP + H2O = S-adenosyl-L-methionine + phosphate + diphosphate. The protein operates within amino-acid biosynthesis; S-adenosyl-L-methionine biosynthesis; S-adenosyl-L-methionine from L-methionine: step 1/1. Catalyzes the formation of S-adenosylmethionine (AdoMet) from methionine and ATP. The overall synthetic reaction is composed of two sequential steps, AdoMet formation and the subsequent tripolyphosphate hydrolysis which occurs prior to release of AdoMet from the enzyme. In Tropheryma whipplei (strain TW08/27) (Whipple's bacillus), this protein is S-adenosylmethionine synthase.